A 132-amino-acid polypeptide reads, in one-letter code: Translation initiation factor 5A (132 aa).

Residue Lys36 is modified to Hypusine.

This sequence belongs to the eIF-5A family.

The protein localises to the cytoplasm. Its function is as follows. Functions by promoting the formation of the first peptide bond. This chain is Translation initiation factor 5A (eIF5A), found in Thermofilum pendens (strain DSM 2475 / Hrk 5).